The following is a 409-amino-acid chain: Alpha-1-antitrypsin (409 aa).

Positions 1-15 (LLLAGLCCLLPGSLA) are cleaved as a signal peptide. Residues 18–39 (PQGDAAQKTDTPPHDQNHPTLN) are disordered. Residues Asn-61, Asn-98, Asn-136, and Asn-262 are each glycosylated (N-linked (GlcNAc...) asparagine). Residues 364 to 383 (GAMFLEAIPMSIPPEVKFNK) form an RCL region. Ser-374 bears the Phosphoserine mark.

Belongs to the serpin family. Interacts with CELA2A. Interacts with ERGIC3 and LMAN1/ERGIC53. Interacts with PRSS1/Trypsin. Plasma.

It is found in the secreted. Its function is as follows. Inhibitor of serine proteases. Its primary target is elastase, but it also has a moderate affinity for plasmin and thrombin. Inhibits trypsin, chymotrypsin and plasminogen activator. In Papio anubis (Olive baboon), this protein is Alpha-1-antitrypsin (SERPINA1).